The sequence spans 84 residues: Small ribosomal subunit protein bS18 (84 aa).

It belongs to the bacterial ribosomal protein bS18 family. As to quaternary structure, part of the 30S ribosomal subunit. Forms a tight heterodimer with protein bS6.

Binds as a heterodimer with protein bS6 to the central domain of the 16S rRNA, where it helps stabilize the platform of the 30S subunit. This is Small ribosomal subunit protein bS18 from Ruthia magnifica subsp. Calyptogena magnifica.